A 353-amino-acid chain; its full sequence is MTVALGKSSKEEKNLFDIADDWLRRDRFVFVGWSGLLLFPCAYFALGGWFTGTTFVTSWYTHGLASSYLEGCNFLTAAVSTPANSLAHSLLLLWGPEAQGDFTRWCQLGGLWTFVAFHGGFGLIGFMLRQFELARSVQLRPYNAIAFSAPIAVFVSVFLIYPLGQSGWFFAPSFGVAAIFRFILFFQGFHNWTLNPFHMMGVAGVLGAALLCAIHGATVENTLFEDGDGANTFRAFNPTQAEETYSMVTANRFWSQIFGVAFSNKRWLHFFMLFVPVTGLWMSAIGVVGLALNLRAYDFVSQEIRAAEDPEFETFYTKNILLNEGIRAWMAAQDQPHENLIFPEEVLPRGNAL.

Residue T2 is modified to N-acetylthreonine. T2 carries the phosphothreonine modification. A helical transmembrane segment spans residues 41–61 (CAYFALGGWFTGTTFVTSWYT). H118 lines the chlorophyll a pocket. Residues 125-141 (GFMLRQFELARSVQLRP) traverse the membrane as a helical segment. Q130 and N143 together coordinate pheophytin a. A helical transmembrane segment spans residues 153-166 (VFVSVFLIYPLGQS). Residue H198 coordinates chlorophyll a. The chain crosses the membrane as a helical span at residues 208 to 228 (AALLCAIHGATVENTLFEDGD). 2 residues coordinate a plastoquinone: H215 and F262. H215 lines the Fe cation pocket. H269 lines the Fe cation pocket. The helical transmembrane segment at 279–295 (GLWMSAIGVVGLALNLR) threads the bilayer.

This sequence belongs to the reaction center PufL/M/PsbA/D family. PSII is composed of 1 copy each of membrane proteins PsbA, PsbB, PsbC, PsbD, PsbE, PsbF, PsbH, PsbI, PsbJ, PsbK, PsbL, PsbM, PsbT, PsbX, PsbY, PsbZ, Psb30/Ycf12, at least 3 peripheral proteins of the oxygen-evolving complex and a large number of cofactors. It forms dimeric complexes. The D1/D2 heterodimer binds P680, chlorophylls that are the primary electron donor of PSII, and subsequent electron acceptors. It shares a non-heme iron and each subunit binds pheophytin, quinone, additional chlorophylls, carotenoids and lipids. There is also a Cl(-1) ion associated with D1 and D2, which is required for oxygen evolution. The PSII complex binds additional chlorophylls, carotenoids and specific lipids. serves as cofactor.

Its subcellular location is the plastid. It is found in the chloroplast thylakoid membrane. The enzyme catalyses 2 a plastoquinone + 4 hnu + 2 H2O = 2 a plastoquinol + O2. In terms of biological role, photosystem II (PSII) is a light-driven water:plastoquinone oxidoreductase that uses light energy to abstract electrons from H(2)O, generating O(2) and a proton gradient subsequently used for ATP formation. It consists of a core antenna complex that captures photons, and an electron transfer chain that converts photonic excitation into a charge separation. The D1/D2 (PsbA/PsbD) reaction center heterodimer binds P680, the primary electron donor of PSII as well as several subsequent electron acceptors. D2 is needed for assembly of a stable PSII complex. This is Photosystem II D2 protein from Cycas taitungensis (Prince sago).